The primary structure comprises 729 residues: Fatty acid oxidation complex subunit alpha (729 aa).

The interval 1–189 (MLYKGDTLYL…KIGLVDGVVK (189 aa)) is enoyl-CoA hydratase/isomerase. Aspartate 296 is a binding site for substrate. The interval 311-729 (ETPKQAAVLG…ARPVGDLKTA (419 aa)) is 3-hydroxyacyl-CoA dehydrogenase. NAD(+) contacts are provided by residues methionine 324, aspartate 343, 400-402 (VVE), lysine 407, and serine 429. Histidine 450 (for 3-hydroxyacyl-CoA dehydrogenase activity) is an active-site residue. Asparagine 453 provides a ligand contact to NAD(+). The substrate site is built by asparagine 500 and tyrosine 660. The tract at residues 708–729 (RHNEPYYPPVEPARPVGDLKTA) is disordered.

This sequence in the N-terminal section; belongs to the enoyl-CoA hydratase/isomerase family. In the C-terminal section; belongs to the 3-hydroxyacyl-CoA dehydrogenase family. In terms of assembly, heterotetramer of two alpha chains (FadB) and two beta chains (FadA).

It carries out the reaction a (3S)-3-hydroxyacyl-CoA + NAD(+) = a 3-oxoacyl-CoA + NADH + H(+). It catalyses the reaction a (3S)-3-hydroxyacyl-CoA = a (2E)-enoyl-CoA + H2O. The catalysed reaction is a 4-saturated-(3S)-3-hydroxyacyl-CoA = a (3E)-enoyl-CoA + H2O. The enzyme catalyses (3S)-3-hydroxybutanoyl-CoA = (3R)-3-hydroxybutanoyl-CoA. It carries out the reaction a (3Z)-enoyl-CoA = a 4-saturated (2E)-enoyl-CoA. It catalyses the reaction a (3E)-enoyl-CoA = a 4-saturated (2E)-enoyl-CoA. It functions in the pathway lipid metabolism; fatty acid beta-oxidation. Functionally, involved in the aerobic and anaerobic degradation of long-chain fatty acids via beta-oxidation cycle. Catalyzes the formation of 3-oxoacyl-CoA from enoyl-CoA via L-3-hydroxyacyl-CoA. It can also use D-3-hydroxyacyl-CoA and cis-3-enoyl-CoA as substrate. The polypeptide is Fatty acid oxidation complex subunit alpha (Escherichia coli O8 (strain IAI1)).